A 146-amino-acid chain; its full sequence is VHWSAEEKQLITGLWGKVNVADCGAEALARLLIVYPWTQRFFSSFGNLSSPTAIIGNPMVRAHGKKVLTSFGEAVKNLDNIKNTFAQLSELHCDKLHVDPENFRLLGDILIIVLAAHFAKEFTPDCQAAWQKLVRVVAHALARKYH.

A Globin domain is found at 2 to 146; the sequence is HWSAEEKQLI…VAHALARKYH (145 aa). Heme b is bound by residues His63 and His92.

This sequence belongs to the globin family. As to quaternary structure, heterotetramer of two alpha chains and two beta chains. In terms of tissue distribution, red blood cells.

Involved in oxygen transport from the lung to the various peripheral tissues. This Stercorarius maccormicki (South polar skua) protein is Hemoglobin subunit beta (HBB).